Reading from the N-terminus, the 669-residue chain is Galactocerebrosidase (669 aa).

An N-terminal signal peptide occupies residues 1–26; the sequence is MTAAAGSAGHAAVPLLLCALLVPGGA. Substrate is bound by residues threonine 93, tryptophan 135, and asparagine 181. Glutamate 182 serves as the catalytic Proton donor/acceptor. The Nucleophile role is filled by glutamate 258. Cysteine 271 and cysteine 378 are oxidised to a cystine. Asparagine 363 carries N-linked (GlcNAc...) asparagine glycosylation. Arginine 380 is a binding site for substrate. N-linked (GlcNAc...) asparagine glycans are attached at residues asparagine 387, asparagine 543, and asparagine 586.

This sequence belongs to the glycosyl hydrolase 59 family.

Its subcellular location is the lysosome. It carries out the reaction a beta-D-galactosyl-(1&lt;-&gt;1')-N-acylsphing-4-enine + H2O = an N-acylsphing-4-enine + D-galactose. The catalysed reaction is beta-D-galactosyl-(1&lt;-&gt;1)-sphing-4-enine + H2O = sphing-4-enine + D-galactose. It catalyses the reaction a D-galactosylceramide + H2O = an N-acyl-sphingoid base + D-galactose. Functionally, hydrolyzes the galactose ester bonds of glycolipids such as galactosylceramide and galactosylsphingosine. Enzyme with very low activity responsible for the lysosomal catabolism of galactosylceramide, a major lipid in myelin, kidney and epithelial cells of small intestine and colon. In Canis lupus familiaris (Dog), this protein is Galactocerebrosidase.